A 172-amino-acid polypeptide reads, in one-letter code: MKRLLVVGRFQPPHLGHLHTIKWALGRAEEVIVVVGSAQESYTLENPMTAGERVHALRLMLEELDDWCRRLMIAPVPDIAMNKVWVQYLKMLLPPFDGVVSGNELVLMLFEDMGLAALRPPMFRRGECSGTRIRRLMASGESGWEDCLHPQVRRYVEEIGLPERLRRLQEMR.

The protein belongs to the archaeal NMN adenylyltransferase family.

Its subcellular location is the cytoplasm. The catalysed reaction is beta-nicotinamide D-ribonucleotide + ATP + H(+) = diphosphate + NAD(+). The protein operates within cofactor biosynthesis; NAD(+) biosynthesis; NAD(+) from nicotinamide D-ribonucleotide: step 1/1. In Aeropyrum pernix (strain ATCC 700893 / DSM 11879 / JCM 9820 / NBRC 100138 / K1), this protein is Nicotinamide-nucleotide adenylyltransferase.